A 657-amino-acid polypeptide reads, in one-letter code: Putative GreA-associated domains protein (657 aa).

Positions 1–152 constitute a GRAD2 domain; the sequence is MDTRDLTAYS…EQEGNKEKAT (152 aa). In terms of domain architecture, GRAD1 spans 153–657; sequence EFYKKALYRF…TAGSFGTLWE (505 aa).

This chain is Putative GreA-associated domains protein, found in Treponema pallidum (strain Nichols).